We begin with the raw amino-acid sequence, 928 residues long: Heme/hemopexin-binding protein (928 aa).

The first 21 residues, 1–21 (MYKLNVISLIILTTCSGAAYA), serve as a signal peptide directing secretion. Repeat copies occupy residues 101–106 (NGKVYL), 149–154 (KDRQVL), 155–160 (KEGLVL), 161–166 (KDGQVV), 167–172 (KEGQVI), 205–210 (NGKVYL), 279–284 (NGKVVL), 410–415 (NGKVNL), 635–640 (NGFVHL), and 674–679 (NGKVSM). Residues 101–679 (NGKVYLANPN…RLGMNGKVSM (579 aa)) are 6 X 6 AA approximate repeats. The tract at residues 149–172 (KDRQVLKEGLVLKDGQVVKEGQVI) is 4 X 6 AA approximate tandem repeats.

The protein resides in the secreted. Binds heme/hemopexin complexes. The polypeptide is Heme/hemopexin-binding protein (hxuA) (Haemophilus influenzae).